The sequence spans 447 residues: Tubulin beta chain (447 aa).

The GTP site is built by Gln11, Glu69, Ser138, Gly142, Thr143, Gly144, Asn204, and Asn226. Residue Glu69 coordinates Mg(2+).

Belongs to the tubulin family. In terms of assembly, dimer of alpha and beta chains. A typical microtubule is a hollow water-filled tube with an outer diameter of 25 nm and an inner diameter of 15 nM. Alpha-beta heterodimers associate head-to-tail to form protofilaments running lengthwise along the microtubule wall with the beta-tubulin subunit facing the microtubule plus end conferring a structural polarity. Microtubules usually have 13 protofilaments but different protofilament numbers can be found in some organisms and specialized cells. The cofactor is Mg(2+).

The protein resides in the cytoplasm. Its subcellular location is the cytoskeleton. In terms of biological role, tubulin is the major constituent of microtubules, a cylinder consisting of laterally associated linear protofilaments composed of alpha- and beta-tubulin heterodimers. Microtubules grow by the addition of GTP-tubulin dimers to the microtubule end, where a stabilizing cap forms. Below the cap, tubulin dimers are in GDP-bound state, owing to GTPase activity of alpha-tubulin. The protein is Tubulin beta chain of Trichophyton rubrum (Athlete's foot fungus).